The following is a 126-amino-acid chain: MSAPNPKAFPLADAALTQQILDVVQQAANLRQLKKGANEATKTLNRGISEFIIMAADCEPIEILLHLPLLCEDKNVPYVFVPSRVALGRACGVSRPVIAASITTNDASAIKTQIYAVKDKIETLLI.

The protein belongs to the eukaryotic ribosomal protein eL8 family. Binds to the C'/D and B/C motifs in U3 snoRNA. Component of the U4/U6-U5 tri-snRNP complex composed of the U4, U6 and U5 snRNAs and at least PRP3, PRP4, PRP6, PRP8, PRP18, PRP31, PRP38, SNU13, SNU23, SNU66, SNU114, SPP381, SMB1, SMD1, SMD2, SMD3, SMX2, SMX3, LSM2, LSM3, LSM4, LSM5, LSM6, LSM7, LSM8, BRR2 and DIB1. Binds to the 5'-stem-loop of U4 snRNA. Component of the ribosomal small subunit (SSU) processome composed of at least 40 protein subunits and snoRNA U3.

It is found in the nucleus. It localises to the nucleolus. Its function is as follows. Common component of the spliceosome and rRNA processing machinery. In association with the spliceosomal U4/U6.U5 tri-snRNP particle, required for splicing of pre-mRNA. In association with box C/D snoRNPs, required for processing of pre-ribosomal RNA (rRNA) and site-specific 2'-O-methylation of substrate RNAs. Essential for the accumulation and stability of U4 snRNA, U6 snRNA, and box C/D snoRNAs. The sequence is that of 13 kDa ribonucleoprotein-associated protein (SNU13) from Saccharomyces cerevisiae (strain ATCC 204508 / S288c) (Baker's yeast).